The sequence spans 454 residues: Sensor histidine kinase RppB (454 aa).

Over 1–13 the chain is Periplasmic; the sequence is MNTRRLFARSRLQ. Residues 14–34 form a helical membrane-spanning segment; sequence LAFWYALVMGGILTLLGLGVY. The Cytoplasmic segment spans residues 35–186; it reads RAIVQANWMA…LAAFDAENKR (152 aa). Residues 187-207 traverse the membrane as a helical segment; it reads ILWILGLSFPIALGLVAFSSW. At 208-454 the chain is on the periplasmic side; the sequence is GLAGLAMRPI…PIFSVPIVHS (247 aa). One can recognise a Histidine kinase domain in the interval 230 to 448; it reads NAAHELRSPL…LFTIQLPIFS (219 aa). H233 is modified (phosphohistidine; by autocatalysis).

Its subcellular location is the cell inner membrane. It catalyses the reaction ATP + protein L-histidine = ADP + protein N-phospho-L-histidine.. Its function is as follows. Member of two-component regulatory system RppA/RppB, involved in the establishment of the appropriate stoichiometry between the 2 photosystems. It senses changes in the plastoquinone (PQ) redox poise. Another group shows this two-component pair, renamed NrsR/NrsS, controls the nickel-dependent expression of the nrsBACD operon; they suggest the photosystem-related activities seen earlier are due to the expression of NrsS (RppB) in the absence of its natural substrate NrsR (RppA). In Synechocystis sp. (strain ATCC 27184 / PCC 6803 / Kazusa), this protein is Sensor histidine kinase RppB.